The sequence spans 419 residues: MTTQLEQAWELAKQRFAAVGIDVEEALRQLDRLPVSMHCWQGDDVSGFENPEGSLTGGIQATGNYPGKARNASELRTDLEQAMRLIPGPKRLNLHAIYLESDTPVSRDQIKPEHFKNWVEWAKANQLGLDFNPSCFSHPLSADGFTLSHADDSIRQFWIDHCKASRRVSAYFGEQLGTPSVMNIWIPDGMKDITVDRLAPRQRLLAALDEVISEKLNPAHHIDAVESKLFGIGAESYTVGSNEFYMGYATSRQTALCLDAGHFHPTEVISDKISAAMLYVPQLLLHVSRPVRWDSDHVVLLDDETQAIASEIVRHDLFDRVHIGLDFFDASINRIAAWVIGTRNMKKALLRALLEPTAELRKLEAAGDYTARLALLEEQKSLPWQAVWEMYCQRHDTPTGSEWLESVRAYEKAILSQRG.

Mn(2+) contacts are provided by histidine 262, aspartate 294, and aspartate 296.

Belongs to the rhamnose isomerase family. Homotetramer. Requires Mn(2+) as cofactor.

Its subcellular location is the cytoplasm. It catalyses the reaction L-rhamnopyranose = L-rhamnulose. Its pathway is carbohydrate degradation; L-rhamnose degradation; glycerone phosphate from L-rhamnose: step 1/3. Its function is as follows. Catalyzes the interconversion of L-rhamnose and L-rhamnulose. The polypeptide is L-rhamnose isomerase (Escherichia coli (strain 55989 / EAEC)).